The chain runs to 220 residues: StAR-related lipid transfer protein 6 (220 aa).

Residues 1–208 enclose the START domain; that stretch reads MDFKAIAQQT…AKDGIKAHRT (208 aa).

May be involved in the intracellular transport of sterols or other lipids. May bind cholesterol or other sterols. The sequence is that of StAR-related lipid transfer protein 6 (STARD6) from Homo sapiens (Human).